Consider the following 430-residue polypeptide: DD-carboxypeptidase/endopeptidase Mpg (430 aa).

Zn(2+) is bound by residues His-295, Asp-299, and His-375.

The protein belongs to the peptidase M23B family. In terms of assembly, monomer. It depends on Zn(2+) as a cofactor. Post-translationally, likely to be synthesized as a proenzyme. The cleavage of the N-terminal domain is probably required for the activation of the enzyme.

The protein resides in the cell outer membrane. In terms of biological role, has both endopeptidase and DD-carboxypeptidase activities. Degrades cell wall peptidoglycan (PG) to allow consummate expression of pili. The polypeptide is DD-carboxypeptidase/endopeptidase Mpg (Neisseria meningitidis serogroup B (strain ATCC BAA-335 / MC58)).